The sequence spans 411 residues: ACT domain-containing protein ACR9 (411 aa).

ACT domains lie at 22-105 (VVTV…NVSK), 111-194 (LLKF…LAGP), and 243-322 (LLQI…VIIV).

Functionally, may bind amino acids. This chain is ACT domain-containing protein ACR9, found in Arabidopsis thaliana (Mouse-ear cress).